Reading from the N-terminus, the 94-residue chain is uncharacterized protein (94 aa).

Positions methionine 1–serine 23 are disordered.

This is an uncharacterized protein from Homo sapiens (Human).